The following is a 276-amino-acid chain: Diaminopimelate epimerase (276 aa).

The substrate site is built by Asn-13, Gln-46, and Asn-66. Catalysis depends on Cys-75, which acts as the Proton donor. Substrate-binding positions include 76–77 (GN), Asn-159, Asn-192, and 210–211 (ER). The Proton acceptor role is filled by Cys-219. 220–221 (GS) provides a ligand contact to substrate.

Belongs to the diaminopimelate epimerase family. In terms of assembly, homodimer.

The protein localises to the cytoplasm. The enzyme catalyses (2S,6S)-2,6-diaminopimelate = meso-2,6-diaminopimelate. It functions in the pathway amino-acid biosynthesis; L-lysine biosynthesis via DAP pathway; DL-2,6-diaminopimelate from LL-2,6-diaminopimelate: step 1/1. Functionally, catalyzes the stereoinversion of LL-2,6-diaminopimelate (L,L-DAP) to meso-diaminopimelate (meso-DAP), a precursor of L-lysine and an essential component of the bacterial peptidoglycan. The chain is Diaminopimelate epimerase from Coxiella burnetii (strain CbuK_Q154) (Coxiella burnetii (strain Q154)).